The following is a 323-amino-acid chain: Phosphomevalonate kinase (323 aa).

It belongs to the GHMP kinase family. Homodimer. The cofactor is Mg(2+).

It catalyses the reaction (R)-5-phosphomevalonate + ATP = (R)-5-diphosphomevalonate + ADP. It functions in the pathway isoprenoid biosynthesis; isopentenyl diphosphate biosynthesis via mevalonate pathway; isopentenyl diphosphate from (R)-mevalonate: step 2/3. Catalyzes the phosphorylation of (R)-mevalonate 5-phosphate (MVAP) to (R)-mevalonate 5-diphosphate (MVAPP). Functions in the mevalonate (MVA) pathway leading to isopentenyl diphosphate (IPP), a key precursor for the biosynthesis of isoprenoid compounds such as archaeal membrane lipids. This chain is Phosphomevalonate kinase, found in Saccharolobus solfataricus (strain ATCC 35092 / DSM 1617 / JCM 11322 / P2) (Sulfolobus solfataricus).